Consider the following 700-residue polypeptide: Polyribonucleotide nucleotidyltransferase (700 aa).

Residues D491 and D497 each contribute to the Mg(2+) site. The 60-residue stretch at 558-617 (PNYAVIEINPDKIRDVIGKGGATIRQLTEETGAVIDIDDAGTIRIFGENKAATKAAIAKI) folds into the KH domain. In terms of domain architecture, S1 motif spans 627-695 (GKTYEGTVAR…NRGRIKLTMK (69 aa)).

It belongs to the polyribonucleotide nucleotidyltransferase family. As to quaternary structure, component of the RNA degradosome, which is a multiprotein complex involved in RNA processing and mRNA degradation. Mg(2+) is required as a cofactor.

It is found in the cytoplasm. The enzyme catalyses RNA(n+1) + phosphate = RNA(n) + a ribonucleoside 5'-diphosphate. Involved in mRNA degradation. Catalyzes the phosphorolysis of single-stranded polyribonucleotides processively in the 3'- to 5'-direction. The protein is Polyribonucleotide nucleotidyltransferase of Psychrobacter cryohalolentis (strain ATCC BAA-1226 / DSM 17306 / VKM B-2378 / K5).